We begin with the raw amino-acid sequence, 425 residues long: Monoacylglycerol lipase ABHD2 (425 aa).

Residues 1–9 are Cytoplasmic-facing; it reads MNAMLETPE. The chain crosses the membrane as a helical; Signal-anchor for type II membrane protein span at residues 10-30; the sequence is LPAVFDGVKLAAVAAVLYVIV. Residues 31–425 lie on the Extracellular side of the membrane; it reads RCLNLKSPTA…DTEQMEAELE (395 aa). One can recognise an AB hydrolase-1 domain in the interval 128-382; the sequence is MVICPGIANH…HGGHLGFFEG (255 aa). N-linked (GlcNAc...) asparagine glycosylation is present at N136. S207 functions as the Nucleophile in the catalytic mechanism. Active-site charge relay system residues include D345 and H376. Residue N410 is glycosylated (N-linked (GlcNAc...) asparagine).

Belongs to the AB hydrolase superfamily. AB hydrolase 4 family. Widely expressed with higher expression in testis. Expressed by vascular smooth muscle cells, non vascular smooth muscle cells and heart.

The protein localises to the cell membrane. The protein resides in the cytoplasmic vesicle. Its subcellular location is the secretory vesicle. It localises to the acrosome membrane. It catalyses the reaction Hydrolyzes glycerol monoesters of long-chain fatty acids.. It carries out the reaction an acetyl ester + H2O = an aliphatic alcohol + acetate + H(+). The catalysed reaction is a triacylglycerol + H2O = a diacylglycerol + a fatty acid + H(+). The enzyme catalyses 2-(5Z,8Z,11Z,14Z-eicosatetraenoyl)-glycerol + H2O = glycerol + (5Z,8Z,11Z,14Z)-eicosatetraenoate + H(+). It catalyses the reaction a butanoate ester + H2O = an aliphatic alcohol + butanoate + H(+). It carries out the reaction hexadecanoate ester + H2O = an aliphatic alcohol + hexadecanoate + H(+). Its activity is regulated as follows. Acylglycerol lipase activity is activated upon binding to progesterone. Its function is as follows. Progesterone-dependent acylglycerol lipase that catalyzes hydrolysis of endocannabinoid arachidonoylglycerol (AG) from cell membrane. Acts as a progesterone receptor: progesterone-binding activates the acylglycerol lipase activity, mediating degradation of 1-arachidonoylglycerol (1AG) and 2-arachidonoylglycerol (2AG) to glycerol and arachidonic acid (AA). Also displays an ester hydrolase activity against acetyl ester, butanoate ester and hexadecanoate ester. Plays a key role in sperm capacitation in response to progesterone by mediating degradation of 2AG, an inhibitor of the sperm calcium channel CatSper, leading to calcium influx via CatSper and sperm activation. Involved in acrosomal reaction. May also play a role in smooth muscle cells migration. This is Monoacylglycerol lipase ABHD2 (Abhd2) from Mus musculus (Mouse).